A 152-amino-acid polypeptide reads, in one-letter code: Urease accessory protein UreE (152 aa).

This sequence belongs to the UreE family.

It is found in the cytoplasm. In terms of biological role, involved in urease metallocenter assembly. Binds nickel. Probably functions as a nickel donor during metallocenter assembly. The sequence is that of Urease accessory protein UreE from Enterobacter sp. (strain 638).